Consider the following 852-residue polypeptide: Homeobox-leucine zipper protein ATHB-14 (852 aa).

The disordered stretch occupies residues 1-25; sequence MMMVHSMSRDMMNRESPDKGLDSGK. The span at 7–22 shows a compositional bias: basic and acidic residues; sequence MSRDMMNRESPDKGLD. The homeobox DNA-binding region spans 22 to 85; it reads DSGKYVRYTP…NRRCREKQRK (64 aa). Residues 80 to 122 are a coiled coil; that stretch reads REKQRKEAARLQTVNRKLNAMNKLLMEENDRLQKQVSNLVYEN. Positions 80-130 are ZIP domain; sequence REKQRKEAARLQTVNRKLNAMNKLLMEENDRLQKQVSNLVYENGHMKHQLH. Polar residues predominate over residues 130 to 148; that stretch reads HTASGTTTDNSCESVVVSG. The tract at residues 130–166 is disordered; the sequence is HTASGTTTDNSCESVVVSGQQHQQQNPNPQHQQRDAN. Residues 149-160 show a composition bias toward low complexity; it reads QQHQQQNPNPQH. The region spanning 164 to 392 is the START domain; it reads DANNPAGLLS…IAQETSGEVQ (229 aa).

Belongs to the HD-ZIP homeobox family. Class III subfamily. As to quaternary structure, homodimer. Heterodimer with ZPR3. Interacts with ESR1 and ESR2. Interacts with ZPR3. Expressed in the center of the meristem and on the adaxial side of the leaves.

The protein localises to the nucleus. Its activity is regulated as follows. Inhibited by ZPR3. Its function is as follows. Probable transcription factor involved in the determination of adaxial-abaxial polarity in ovule primordium. Specifies adaxial leaf fates. The chain is Homeobox-leucine zipper protein ATHB-14 (ATHB-14) from Arabidopsis thaliana (Mouse-ear cress).